Consider the following 102-residue polypeptide: Putative UPF0320 protein YMR326C (102 aa).

This sequence belongs to the UPF0320 family.

In Saccharomyces cerevisiae (strain ATCC 204508 / S288c) (Baker's yeast), this protein is Putative UPF0320 protein YMR326C.